We begin with the raw amino-acid sequence, 236 residues long: 2-C-methyl-D-erythritol 4-phosphate cytidylyltransferase (236 aa).

This sequence belongs to the IspD/TarI cytidylyltransferase family. IspD subfamily. In terms of assembly, homodimer.

It carries out the reaction 2-C-methyl-D-erythritol 4-phosphate + CTP + H(+) = 4-CDP-2-C-methyl-D-erythritol + diphosphate. The protein operates within isoprenoid biosynthesis; isopentenyl diphosphate biosynthesis via DXP pathway; isopentenyl diphosphate from 1-deoxy-D-xylulose 5-phosphate: step 2/6. In terms of biological role, catalyzes the formation of 4-diphosphocytidyl-2-C-methyl-D-erythritol from CTP and 2-C-methyl-D-erythritol 4-phosphate (MEP). The chain is 2-C-methyl-D-erythritol 4-phosphate cytidylyltransferase from Escherichia coli O139:H28 (strain E24377A / ETEC).